We begin with the raw amino-acid sequence, 445 residues long: C-terminal-binding protein 2 (445 aa).

At R22 the chain carries Asymmetric dimethylarginine. NAD(+) is bound by residues S106, 186–191, D210, 243–249, 270–272, and D296; these read IGFGRT, CNLNEHN, and AAR. Residue R272 is part of the active site. E301 is an active-site residue. H321 acts as the Proton donor in catalysis. Residue 321–324 participates in NAD(+) binding; the sequence is HTAW. Residues 414 to 445 form a disordered region; sequence THNLPTVAHPSQAPSPNQPTKHGDNREHPNEQ. S428 bears the Phosphoserine mark. Positions 434–445 are enriched in basic and acidic residues; sequence KHGDNREHPNEQ.

This sequence belongs to the D-isomer specific 2-hydroxyacid dehydrogenase family. Can form homodimers or heterodimers of CTBP1 and CTBP2. Interacts with HIPK2 and ZNF217. Interacts with PRDM16; represses white adipose tissue (WAT)-specific genes expression. Interacts with PNN, NRIP1 and WIZ. Interacts with MCRIP1. In terms of assembly, (Microbial infection) Interacts with human adenovirus 5 E1A protein; this interaction seems to potentiate viral replication. Ubiquitous. Highest levels in heart, skeletal muscle, and pancreas.

The protein localises to the nucleus. It is found in the synapse. In terms of biological role, corepressor targeting diverse transcription regulators. Functions in brown adipose tissue (BAT) differentiation. Its function is as follows. Isoform 2 probably acts as a scaffold for specialized synapses. The chain is C-terminal-binding protein 2 (CTBP2) from Homo sapiens (Human).